An 83-amino-acid chain; its full sequence is ATP synthase subunit c (83 aa).

2 helical membrane-spanning segments follow: residues 10 to 30 (IAVA…FGLL) and 52 to 72 (MFIV…IALF).

This sequence belongs to the ATPase C chain family. As to quaternary structure, F-type ATPases have 2 components, F(1) - the catalytic core - and F(0) - the membrane proton channel. F(1) has five subunits: alpha(3), beta(3), gamma(1), delta(1), epsilon(1). F(0) has three main subunits: a(1), b(2) and c(10-14). The alpha and beta chains form an alternating ring which encloses part of the gamma chain. F(1) is attached to F(0) by a central stalk formed by the gamma and epsilon chains, while a peripheral stalk is formed by the delta and b chains.

It is found in the cell inner membrane. Its function is as follows. F(1)F(0) ATP synthase produces ATP from ADP in the presence of a proton or sodium gradient. F-type ATPases consist of two structural domains, F(1) containing the extramembraneous catalytic core and F(0) containing the membrane proton channel, linked together by a central stalk and a peripheral stalk. During catalysis, ATP synthesis in the catalytic domain of F(1) is coupled via a rotary mechanism of the central stalk subunits to proton translocation. In terms of biological role, key component of the F(0) channel; it plays a direct role in translocation across the membrane. A homomeric c-ring of between 10-14 subunits forms the central stalk rotor element with the F(1) delta and epsilon subunits. This Shewanella baltica (strain OS223) protein is ATP synthase subunit c.